The primary structure comprises 670 residues: Sodium, potassium, lithium and rubidium/H(+) antiporter (670 aa).

The next 11 helical transmembrane spans lie at 5 to 27 (LVVLVLLTIIAISNIVNRFIPFI), 46 to 66 (GLHFELNTELFFVLFIAPLLF), 83 to 103 (PILLLALGLVFATVIVGGYTI), 105 to 125 (WMIPAIPLAAAFGLAAILSPT), 156 to 176 (ASGLVAFKFAIAAAVTGAFSL), 182 to 202 (SFVFISLGGLLCGVVISFLII), 228 to 248 (FVIYLAAEEIGVSGILAVVAG), 276 to 296 (IILFILNGLVFVILGTQIPDV), 314 to 334 (YILVITFTLMLLRFLWVLFFW), 355 to 375 (LLISISGVRGAVTLAGSFSIP), and 389 to 409 (LILFLAAGVILCTLVIATVVL).

The protein belongs to the monovalent cation:proton antiporter 1 (CPA1) transporter (TC 2.A.36) family. Nhak (TC 2.A.36.3.2) subfamily.

It is found in the cell membrane. In terms of biological role, transporter involved in the efflux of sodium, potassium, lithium and rubidium. The protein is Sodium, potassium, lithium and rubidium/H(+) antiporter (nhaK) of Bacillus subtilis (strain 168).